We begin with the raw amino-acid sequence, 156 residues long: Ribosome maturation factor RimP (156 aa).

Belongs to the RimP family.

The protein resides in the cytoplasm. Functionally, required for maturation of 30S ribosomal subunits. This is Ribosome maturation factor RimP from Oenococcus oeni (strain ATCC BAA-331 / PSU-1).